The primary structure comprises 250 residues: Geranylgeranylglyceryl phosphate synthase (250 aa).

Mg(2+) is bound by residues aspartate 26 and serine 55. Sn-glycerol 1-phosphate contacts are provided by residues 174–180 (YLEAGSG), 205–206 (GG), and 227–228 (GT).

This sequence belongs to the GGGP/HepGP synthase family. Group II subfamily. Requires Mg(2+) as cofactor.

Its subcellular location is the cytoplasm. The enzyme catalyses sn-glycerol 1-phosphate + (2E,6E,10E)-geranylgeranyl diphosphate = sn-3-O-(geranylgeranyl)glycerol 1-phosphate + diphosphate. The protein operates within membrane lipid metabolism; glycerophospholipid metabolism. In terms of biological role, prenyltransferase that catalyzes the transfer of the geranylgeranyl moiety of geranylgeranyl diphosphate (GGPP) to the C3 hydroxyl of sn-glycerol-1-phosphate (G1P). This reaction is the first ether-bond-formation step in the biosynthesis of archaeal membrane lipids. The protein is Geranylgeranylglyceryl phosphate synthase of Nitrosopumilus maritimus (strain SCM1).